The sequence spans 150 residues: uncharacterized protein (150 aa).

The first 28 residues, 1-28, serve as a signal peptide directing secretion; sequence MPLDVWIAFSYFIDFFQWLFMLNAEVMR.

This is an uncharacterized protein from Archaeoglobus fulgidus (strain ATCC 49558 / DSM 4304 / JCM 9628 / NBRC 100126 / VC-16).